We begin with the raw amino-acid sequence, 242 residues long: Glucosamine-6-phosphate deaminase (242 aa).

The active-site Proton acceptor; for enolization step is the aspartate 67. Asparagine 136 serves as the catalytic For ring-opening step. Histidine 138 (proton acceptor; for ring-opening step) is an active-site residue. Glutamate 143 functions as the For ring-opening step in the catalytic mechanism.

It belongs to the glucosamine/galactosamine-6-phosphate isomerase family. NagB subfamily.

It catalyses the reaction alpha-D-glucosamine 6-phosphate + H2O = beta-D-fructose 6-phosphate + NH4(+). The protein operates within amino-sugar metabolism; N-acetylneuraminate degradation; D-fructose 6-phosphate from N-acetylneuraminate: step 5/5. Its function is as follows. Catalyzes the reversible isomerization-deamination of glucosamine 6-phosphate (GlcN6P) to form fructose 6-phosphate (Fru6P) and ammonium ion. The polypeptide is Glucosamine-6-phosphate deaminase (Clostridium perfringens (strain 13 / Type A)).